Here is a 570-residue protein sequence, read N- to C-terminus: Aspartyl aminopeptidase (570 aa).

Residue His86 coordinates Zn(2+). His160 contacts substrate. A Zn(2+)-binding site is contributed by Asp324. Glu379 is a substrate binding site. Positions 380 and 434 each coordinate Zn(2+). Substrate-binding residues include Asp434, His437, Lys462, and Tyr469. Residue His534 participates in Zn(2+) binding.

The protein belongs to the peptidase M18 family. As to quaternary structure, homododecamer composed of homodimers and homotrimers that assemble into a tetrahedron shape to create a central tunnel containing the active sites. Homooctamer. It depends on Zn(2+) as a cofactor.

The protein localises to the cytoplasm. The catalysed reaction is Release of an N-terminal aspartate or glutamate from a peptide, with a preference for aspartate.. Its activity is regulated as follows. Activated by Co(2+). Inhibited by high concentrations (&gt;1mM) of Zn(2+). In terms of biological role, aminopeptidase which specifically catalyzes the removal of glutamic acid or aspartic acid residues from the N-terminus of peptides. May play a role in the final step of host hemoglobin catabolism, by cleaving hemoglobin-derived oligopeptides in the cytoplasm. The protein is Aspartyl aminopeptidase of Plasmodium falciparum (isolate 3D7).